Consider the following 410-residue polypeptide: MKEELIERFTRYVKIDTQSNEDSHTVPTTPGQIEFGKLLVEELKEVGLTEVTMDDNGYVMATLPANTDKDVPVIGFLAHLDTATDFTGKNVKPQIHENFDGNAITLNEELNVVLTPEQFPELPSYKGHTIITTDGTTLLGADDKAGLTEIMVAMNYLIHNPQIKHGKIRVAFTPDEEIGRGPAHFDVEAFGASFAYTMDGGPLGGLEYESFNAAGAKLTFNGTNTHPGTAKNKMRNATKLAMEFNGHLPVEEAPEYTEGYEGFYHLLSLNGDVEQSKAYYIIRDFDRKNFEARKNTIENIVKQMQEKYGQDAVVLEMNDQYYNMLEKIEPVREIVDIAYEAMKSLNIEPNIHPIRGGTDGSQLSYMGLPTPNIFTGGENYHGKFEYVSVDVMEKAVQVIIEIARRFEEQA.

His-79 contacts Zn(2+). The active site involves Asp-81. Residue Asp-142 coordinates Zn(2+). Glu-176 serves as the catalytic Proton acceptor. Zn(2+) is bound by residues Glu-177, Asp-199, and His-381.

It belongs to the peptidase M20B family. Requires Zn(2+) as cofactor.

It is found in the cytoplasm. It carries out the reaction Release of the N-terminal residue from a tripeptide.. Functionally, cleaves the N-terminal amino acid of tripeptides. This Bacillus thuringiensis (strain Al Hakam) protein is Peptidase T.